The sequence spans 61 residues: Large ribosomal subunit protein uL30 (61 aa).

This sequence belongs to the universal ribosomal protein uL30 family. Part of the 50S ribosomal subunit.

The protein is Large ribosomal subunit protein uL30 of Laribacter hongkongensis (strain HLHK9).